The following is a 717-amino-acid chain: SAGA factor-like TAF6 (717 aa).

Positions 123 to 204 (KSYAGFDPRS…VPPMLGAMDS (82 aa)) are sufficient for interaction with Taf9.

This sequence belongs to the TAF6 family. Component of the Spt-Ada-Gcn5 acetyltransferase (SAGA) complex consisting of wda/Taf5L, Saf6, Taf9, Taf10b, Taf12, Ada1, Spt3, Spt7, Spt20, Sf3b3, Sf3b5, Nipped-A/Tra1, a histone acetyltransferase (HAT) module made up of Gcn5, Ada2b (Isoform B), Ada3 and Sgf29, and a deubiquitinase (DUB) module made up of not/nonstop, Sgf11 and e(y)2 tethered to SAGA by Atxn7; not essential for SAGA complex assembly, histone-modifying activity or chromosomal recruitment. Interacts (via N-terminal histone-fold domain) with Taf9 (via N-terminal histone-fold domain); the interaction is probably direct. Probably forms a histone-like heterooctamer structure with Taf9, Taf12 and Taf10b.

The protein localises to the nucleus. The protein resides in the chromosome. In terms of biological role, component of the transcription regulatory complex SAGA, a multiprotein complex that activates transcription by remodeling chromatin and mediating histone acetylation and deubiquitination. The SAGA complex predominantly acetylates histone H3. Involved in SAGA complex coactivator function but not essential for SAGA complex assembly, histone-modifying activity or chromosomal recruitment. Required for oogenesis; involved in transcriptional activation. The sequence is that of SAGA factor-like TAF6 from Drosophila melanogaster (Fruit fly).